The following is a 404-amino-acid chain: DNA gyrase subunit B (404 aa).

The Toprim domain occupies 321–404 (SEIYIVEGDS…VIIMTDADVD (84 aa)). Mg(2+) contacts are provided by Glu-327, Asp-400, and Asp-402.

It belongs to the type II topoisomerase GyrB family. As to quaternary structure, heterotetramer, composed of two GyrA and two GyrB chains. In the heterotetramer, GyrA contains the active site tyrosine that forms a transient covalent intermediate with DNA, while GyrB binds cofactors and catalyzes ATP hydrolysis. Mg(2+) serves as cofactor. The cofactor is Mn(2+). Requires Ca(2+) as cofactor.

It localises to the cytoplasm. The enzyme catalyses ATP-dependent breakage, passage and rejoining of double-stranded DNA.. Its function is as follows. A type II topoisomerase that negatively supercoils closed circular double-stranded (ds) DNA in an ATP-dependent manner to modulate DNA topology and maintain chromosomes in an underwound state. Negative supercoiling favors strand separation, and DNA replication, transcription, recombination and repair, all of which involve strand separation. Also able to catalyze the interconversion of other topological isomers of dsDNA rings, including catenanes and knotted rings. Type II topoisomerases break and join 2 DNA strands simultaneously in an ATP-dependent manner. The protein is DNA gyrase subunit B (gyrB) of Bacillus mycoides.